An 811-amino-acid polypeptide reads, in one-letter code: Serine/threonine-protein kinase prpf4B (811 aa).

Disordered regions lie at residues 1–257 (MVIE…TNEP), 288–341 (EKYN…NQIE), 353–379 (KDQNSENSSAFNDNNNDESCSSEEDLK), and 408–452 (VSIK…TNGG). Low complexity predominate over residues 46–71 (SSPASRETSSSKLMSPSKNQSSSSSR). The segment covering 81–202 (RRKDERYSSS…DNMDSRDNKN (122 aa)) has biased composition (basic and acidic residues). Positions 203-215 (GSRQSINNNTLSY) are enriched in polar residues. Basic and acidic residues predominate over residues 217-240 (KQADRKDEVRVKDNISVNDDKTNH). 2 stretches are compositionally biased toward polar residues: residues 241–257 (GENLTNESITATSTNEP) and 293–302 (EQPQPITSSL). Residues 310–327 (SNTNTNSNSTPVATTTTS) show a composition bias toward low complexity. Positions 490–808 (YQIFSPIGSG…PFEALNHEFL (319 aa)) constitute a Protein kinase domain. Residues 496–504 (IGSGVFSTV) and lysine 519 contribute to the ATP site. The active-site Proton acceptor is the aspartate 619.

The protein belongs to the protein kinase superfamily. CMGC Ser/Thr protein kinase family. Phosphorylated. Autophosphorylated; phosphorylation inhibits interaction with its targets.

The protein resides in the nucleus. It localises to the chromosome. Its subcellular location is the centromere. The protein localises to the kinetochore. The catalysed reaction is L-seryl-[protein] + ATP = O-phospho-L-seryl-[protein] + ADP + H(+). It catalyses the reaction L-threonyl-[protein] + ATP = O-phospho-L-threonyl-[protein] + ADP + H(+). In terms of biological role, serine/threonine kinase involved in spliceosomal assembly as well as mitosis and signaling regulation. The sequence is that of Serine/threonine-protein kinase prpf4B (prp4k) from Dictyostelium discoideum (Social amoeba).